We begin with the raw amino-acid sequence, 342 residues long: Probable dual-specificity RNA methyltransferase RlmN (342 aa).

Residue Glu-91 is the Proton acceptor of the active site. The region spanning 97–327 (YKHGNSICVS…TTIRREMGAD (231 aa)) is the Radical SAM core domain. Cys-104 and Cys-332 form a disulfide bridge. Positions 111, 115, and 118 each coordinate [4Fe-4S] cluster. Residues 158-159 (GE), Ser-190, 213-215 (SLH), and Asn-289 each bind S-adenosyl-L-methionine. Residue Cys-332 is the S-methylcysteine intermediate of the active site.

The protein belongs to the radical SAM superfamily. RlmN family. [4Fe-4S] cluster serves as cofactor.

The protein resides in the cytoplasm. It carries out the reaction adenosine(2503) in 23S rRNA + 2 reduced [2Fe-2S]-[ferredoxin] + 2 S-adenosyl-L-methionine = 2-methyladenosine(2503) in 23S rRNA + 5'-deoxyadenosine + L-methionine + 2 oxidized [2Fe-2S]-[ferredoxin] + S-adenosyl-L-homocysteine. The enzyme catalyses adenosine(37) in tRNA + 2 reduced [2Fe-2S]-[ferredoxin] + 2 S-adenosyl-L-methionine = 2-methyladenosine(37) in tRNA + 5'-deoxyadenosine + L-methionine + 2 oxidized [2Fe-2S]-[ferredoxin] + S-adenosyl-L-homocysteine. In terms of biological role, specifically methylates position 2 of adenine 2503 in 23S rRNA and position 2 of adenine 37 in tRNAs. The protein is Probable dual-specificity RNA methyltransferase RlmN of Clostridium botulinum (strain ATCC 19397 / Type A).